The sequence spans 424 residues: Hemagglutinin-esterase (424 aa).

The N-terminal stretch at 1-16 (MFLLPRFVLVSCIIGS) is a signal peptide. Residues 7 to 127 (FVLVSCIIGS…SNDIWMQNKG (121 aa)) are esterase domain 1. The Virion surface segment spans residues 17–392 (LGFDNPPTNV…PICVYDPLPI (376 aa)). Serine 40 serves as the catalytic Nucleophile. Residues cysteine 44 and cysteine 65 are joined by a disulfide bond. N-linked (GlcNAc...) asparagine; by host glycans are attached at residues asparagine 54, asparagine 89, asparagine 153, asparagine 236, and asparagine 301. 3 disulfides stabilise this stretch: cysteine 113-cysteine 162, cysteine 197-cysteine 276, and cysteine 205-cysteine 249. The interval 128 to 266 (LFYTQVYKNM…GNYLAISNEL (139 aa)) is receptor binding. An esterase domain 2 region spans residues 267-379 (LLTVPTKAIC…RCPTAADINT (113 aa)). An intrachain disulfide couples cysteine 307 to cysteine 312. Asparagine 316 is a glycosylation site (N-linked (GlcNAc...) asparagine; by host). Residues aspartate 326 and histidine 329 each act as charge relay system in the active site. Residues cysteine 347 and cysteine 371 are joined by a disulfide bond. A glycan (N-linked (GlcNAc...) asparagine; by host) is linked at asparagine 358. The helical transmembrane segment at 393-413 (IFLGILLGVAVIIIVVLLLYF) threads the bilayer. Topologically, residues 414–424 (MVDNGTRLHDA) are intravirion. A glycan (N-linked (GlcNAc...) asparagine; by host) is linked at asparagine 417.

It belongs to the influenza type C/coronaviruses hemagglutinin-esterase family. In terms of assembly, homodimer; disulfide-linked. Forms a complex with the M protein in the pre-Golgi. Associates then with S-M complex to form a ternary complex S-M-HE. In terms of processing, N-glycosylated in the host RER.

The protein localises to the virion membrane. Its subcellular location is the host cell membrane. The catalysed reaction is N-acetyl-9-O-acetylneuraminate + H2O = N-acetylneuraminate + acetate + H(+). It carries out the reaction N-acetyl-4-O-acetylneuraminate + H2O = N-acetylneuraminate + acetate + H(+). Structural protein that makes short spikes at the surface of the virus. Contains receptor binding and receptor-destroying activities. Mediates de-O-acetylation of N-acetyl-4-O-acetylneuraminic acid, which is probably the receptor determinant recognized by the virus on the surface of erythrocytes and susceptible cells. This receptor-destroying activity is important for virus release as it probably helps preventing self-aggregation and ensures the efficient spread of the progeny virus from cell to cell. May serve as a secondary viral attachment protein for initiating infection, the spike protein being the major one. May become a target for both the humoral and the cellular branches of the immune system. This Bovine coronavirus (strain Ontario) (BCoV) protein is Hemagglutinin-esterase.